The following is a 393-amino-acid chain: Formate-dependent phosphoribosylglycinamide formyltransferase (393 aa).

N(1)-(5-phospho-beta-D-ribosyl)glycinamide-binding positions include 22–23 and glutamate 82; that span reads EL. ATP is bound by residues arginine 114, lysine 155, 160–165, 195–198, and glutamate 203; these read SSGKGQ and EGFV. The ATP-grasp domain maps to 119 to 308; that stretch reads RLAAEDLGIP…EFALHLRAIL (190 aa). Mg(2+) contacts are provided by glutamate 267 and glutamate 279. N(1)-(5-phospho-beta-D-ribosyl)glycinamide contacts are provided by residues aspartate 286, lysine 356, and 363–364; that span reads RR.

The protein belongs to the PurK/PurT family. In terms of assembly, homodimer.

The catalysed reaction is N(1)-(5-phospho-beta-D-ribosyl)glycinamide + formate + ATP = N(2)-formyl-N(1)-(5-phospho-beta-D-ribosyl)glycinamide + ADP + phosphate + H(+). It functions in the pathway purine metabolism; IMP biosynthesis via de novo pathway; N(2)-formyl-N(1)-(5-phospho-D-ribosyl)glycinamide from N(1)-(5-phospho-D-ribosyl)glycinamide (formate route): step 1/1. In terms of biological role, involved in the de novo purine biosynthesis. Catalyzes the transfer of formate to 5-phospho-ribosyl-glycinamide (GAR), producing 5-phospho-ribosyl-N-formylglycinamide (FGAR). Formate is provided by PurU via hydrolysis of 10-formyl-tetrahydrofolate. The chain is Formate-dependent phosphoribosylglycinamide formyltransferase from Hydrogenovibrio crunogenus (strain DSM 25203 / XCL-2) (Thiomicrospira crunogena).